Consider the following 128-residue polypeptide: MGLMWGLFSVIIASVAQLSLGFAASHLPPMTHLWDFIATLLAFGLDARILLLGLLGYLLSVFCWYKTLHKLALSKAYALLSMSYVLVWIASMVLPGWGGTFSLKALLGVACIMSGLMLIFLPTTKQRY.

The Cytoplasmic portion of the chain corresponds to 1–2 (MG). A helical membrane pass occupies residues 3-23 (LMWGLFSVIIASVAQLSLGFA). At 24–35 (ASHLPPMTHLWD) the chain is on the periplasmic side. Residues 36 to 56 (FIATLLAFGLDARILLLGLLG) traverse the membrane as a helical segment. The Cytoplasmic segment spans residues 57–77 (YLLSVFCWYKTLHKLALSKAY). Residues 78–98 (ALLSMSYVLVWIASMVLPGWG) form a helical membrane-spanning segment. Over 99–100 (GT) the chain is Periplasmic. A helical membrane pass occupies residues 101-121 (FSLKALLGVACIMSGLMLIFL). The Cytoplasmic segment spans residues 122–128 (PTTKQRY).

It belongs to the ArnF family. In terms of assembly, heterodimer of ArnE and ArnF.

The protein resides in the cell inner membrane. It participates in bacterial outer membrane biogenesis; lipopolysaccharide biosynthesis. In terms of biological role, translocates 4-amino-4-deoxy-L-arabinose-phosphoundecaprenol (alpha-L-Ara4N-phosphoundecaprenol) from the cytoplasmic to the periplasmic side of the inner membrane. This Shigella dysenteriae serotype 1 (strain Sd197) protein is Probable 4-amino-4-deoxy-L-arabinose-phosphoundecaprenol flippase subunit ArnF.